A 470-amino-acid chain; its full sequence is Nuclear receptor subfamily 0 group B member 1 (470 aa).

Repeat copies occupy residues 1–67 (MAGE…YRCC), 68–133 (FCGK…YRCC), and 134–200 (FCGE…YRCC). Residues 1–253 (MAGENHQWQG…RPVALKSPQV (253 aa)) form a 4 X 67 AA tandem repeats region. Short sequence motifs (LXXLL motif) lie at residues 13 to 17 (LYNML), 80 to 84 (LYSML), and 146 to 150 (LYSLL). The 4; truncated repeat unit spans residues 201–253 (FCGEDHPQQGSTLYCVPTSTNQAQAAPEERPRAPWWDTSSGALRPVALKSPQV). The region spanning 205 to 469 (DHPQQGSTLY…DMMLEMLCTK (265 aa)) is the NR LBD domain. An AF-2 motif motif is present at residues 461-466 (MMLEML).

The protein belongs to the nuclear hormone receptor family. NR0 subfamily. As to quaternary structure, homodimer. Interacts with NR5A1, NR5A2, NR0B2 and with COPS2. Interacts with ESRRB; represses ESRRB activity at the GATA6 promoter.

Its subcellular location is the nucleus. The protein localises to the cytoplasm. Functionally, nuclear receptor that lacks a DNA-binding domain and acts as a corepressor that inhibits the transcriptional activity of other nuclear receptors through heterodimeric interactions. Component of a cascade required for the development of the hypothalamic-pituitary-adrenal-gonadal axis. May also have a role in the development of the embryo and in the maintenance of embryonic stem cell pluripotency. The polypeptide is Nuclear receptor subfamily 0 group B member 1 (NR0B1) (Homo sapiens (Human)).